Here is a 90-residue protein sequence, read N- to C-terminus: Acylphosphatase (90 aa).

One can recognise an Acylphosphatase-like domain in the interval 3-90 (AIEVDVFGLV…FETNDFAIRG (88 aa)). Active-site residues include arginine 18 and asparagine 36.

This sequence belongs to the acylphosphatase family.

It catalyses the reaction an acyl phosphate + H2O = a carboxylate + phosphate + H(+). The polypeptide is Acylphosphatase (acyP) (Leuconostoc mesenteroides subsp. mesenteroides (strain ATCC 8293 / DSM 20343 / BCRC 11652 / CCM 1803 / JCM 6124 / NCDO 523 / NBRC 100496 / NCIMB 8023 / NCTC 12954 / NRRL B-1118 / 37Y)).